The following is a 546-amino-acid chain: Probable protein kinase UbiB (546 aa).

A Protein kinase domain is found at 124–502; sequence DFEIKPLASA…HVRQGQSRYF (379 aa). Residues 130–138 and Lys153 each bind ATP; that span reads LASASIAQV. Asp288 serves as the catalytic Proton acceptor. Helical transmembrane passes span 501 to 521 and 522 to 542; these read YFLGIGATLVLSGTFLLVSRP and EWGLMPGWLMAGGLIAWFVGW.

Belongs to the ABC1 family. UbiB subfamily.

Its subcellular location is the cell inner membrane. It participates in cofactor biosynthesis; ubiquinone biosynthesis [regulation]. In terms of biological role, is probably a protein kinase regulator of UbiI activity which is involved in aerobic coenzyme Q (ubiquinone) biosynthesis. The sequence is that of Probable protein kinase UbiB from Escherichia coli O45:K1 (strain S88 / ExPEC).